The following is a 722-amino-acid chain: Nucleolar protein 10 (722 aa).

WD repeat units lie at residues 50–90 (EMPT…LKFE), 174–213 (TDAA…RVAA), 228–266 (EGLP…PLLV), 270–308 (YYGL…VFSS), and 310–349 (EPQA…PAPR). 2 coiled-coil regions span residues 423-476 (EYRK…ANVA) and 511-534 (SNVA…EEQE). Disordered regions lie at residues 521–555 (LLEE…GWVQ), 572–607 (SYIQ…PRFY), 616–635 (RSFS…LEER), and 664–722 (TEKQ…RRPF). Positions 523 to 534 (EEEQEQAEEEQE) are enriched in acidic residues. A compositionally biased stretch (basic and acidic residues) spans 572–586 (SYIQRQERRQQDRNT). Positions 587–600 (RLQSSDTHTQQSHG) are enriched in polar residues. Residues 620–681 (DVSRKQKTHK…QAERDHHEER (62 aa)) are a coiled coil. Basic and acidic residues predominate over residues 664–682 (TEKQRFQQQAERDHHEERR). Composition is skewed to basic residues over residues 683-693 (RIRRSAGHLHS) and 702-722 (GGGR…RRPF).

It belongs to the WD repeat NOL10/ENP2 family.

The protein localises to the nucleus. It localises to the nucleolus. The protein is Nucleolar protein 10 (nol10) of Danio rerio (Zebrafish).